Reading from the N-terminus, the 421-residue chain is Phaseolin, beta-type (421 aa).

The N-terminal stretch at 1 to 24 is a signal peptide; sequence MMRARVPLLLLGILFLASLSASFA. Positions 237-390 constitute a Cupin type-1 domain; the sequence is KSLSKQDNTI…TFSGSGDEVM (154 aa). Residues asparagine 252 and asparagine 341 are each glycosylated (N-linked (GlcNAc...) asparagine).

This sequence belongs to the 7S seed storage protein family. As to quaternary structure, homotrimer that associates to form a dodecamer.

Its subcellular location is the vacuole. It localises to the aleurone grain. Its function is as follows. Major seed storage protein. In Phaseolus vulgaris (Kidney bean), this protein is Phaseolin, beta-type.